The following is a 283-amino-acid chain: Flagellar filament 35 kDa core protein (283 aa).

This sequence belongs to the bacterial flagellin family. The flagellum consists of two outer layers around a core that contains several antigenically related polypeptides.

It localises to the periplasmic flagellum. The protein localises to the periplasm. In terms of biological role, component of the core of the flagella. The protein is Flagellar filament 35 kDa core protein (flaB) of Leptospira interrogans serogroup Icterohaemorrhagiae serovar copenhageni (strain Fiocruz L1-130).